The sequence spans 484 residues: Protein phosphatase 1B (484 aa).

The segment covering 1–14 (MGAFLDKPKTEKHN) has biased composition (basic and acidic residues). Residues 1-20 (MGAFLDKPKTEKHNAHGAGN) are disordered. Gly2 carries N-myristoyl glycine lipidation. Lys12 is covalently cross-linked (Glycyl lysine isopeptide (Lys-Gly) (interchain with G-Cter in ISG15)). The PPM-type phosphatase domain occupies 23-295 (RYGLSSMQGW…DNMSIVLVCF (273 aa)). Asp60 and Gly61 together coordinate Mn(2+). Residue Lys142 forms a Glycyl lysine isopeptide (Lys-Gly) (interchain with G-Cter in ISG15) linkage. 2 residues coordinate Mn(2+): Asp243 and Asp286. Ser391 is subject to Phosphoserine. Residues 431–484 (EENPAEQAATAASSNSDAGNTVAMQESHTESKSDLAELDSCTEDAGTKMSGEKL) are disordered. The span at 440-456 (TAASSNSDAGNTVAMQE) shows a compositional bias: polar residues.

The protein belongs to the PP2C family. As to quaternary structure, monomer. Interacts with PAK6. Interacts with the phosphorylated form of IKBKB/IKKB. The cofactor is Mg(2+). Requires Mn(2+) as cofactor. Isgylation negatively regulates its activity. In terms of processing, N-myristoylation is essential for the recognition of its substrates for dephosphorylation.

It is found in the cytoplasm. Its subcellular location is the cytosol. The protein localises to the membrane. The enzyme catalyses O-phospho-L-seryl-[protein] + H2O = L-seryl-[protein] + phosphate. The catalysed reaction is O-phospho-L-threonyl-[protein] + H2O = L-threonyl-[protein] + phosphate. Enzyme with a broad specificity. Dephosphorylates PRKAA1 and PRKAA2. Inhibits TBK1-mediated antiviral signaling by dephosphorylating it at 'Ser-172'. Plays an important role in the termination of TNF-alpha-mediated NF-kappa-B activation through dephosphorylating and inactivating IKBKB/IKKB. In Bos taurus (Bovine), this protein is Protein phosphatase 1B (PPM1B).